The following is a 243-amino-acid chain: Phosphatidylserine decarboxylase proenzyme (243 aa).

Catalysis depends on serine 212, which acts as the Schiff-base intermediate with substrate; via pyruvic acid. Serine 212 bears the Pyruvic acid (Ser); by autocatalysis mark.

The protein belongs to the phosphatidylserine decarboxylase family. PSD-A subfamily. Heterodimer of a large membrane-associated beta subunit and a small pyruvoyl-containing alpha subunit. The cofactor is pyruvate. Post-translationally, is synthesized initially as an inactive proenzyme. Formation of the active enzyme involves a self-maturation process in which the active site pyruvoyl group is generated from an internal serine residue via an autocatalytic post-translational modification. Two non-identical subunits are generated from the proenzyme in this reaction, and the pyruvate is formed at the N-terminus of the alpha chain, which is derived from the carboxyl end of the proenzyme. The post-translation cleavage follows an unusual pathway, termed non-hydrolytic serinolysis, in which the side chain hydroxyl group of the serine supplies its oxygen atom to form the C-terminus of the beta chain, while the remainder of the serine residue undergoes an oxidative deamination to produce ammonia and the pyruvoyl prosthetic group on the alpha chain.

The protein resides in the cell membrane. The enzyme catalyses a 1,2-diacyl-sn-glycero-3-phospho-L-serine + H(+) = a 1,2-diacyl-sn-glycero-3-phosphoethanolamine + CO2. It functions in the pathway phospholipid metabolism; phosphatidylethanolamine biosynthesis; phosphatidylethanolamine from CDP-diacylglycerol: step 2/2. Functionally, catalyzes the formation of phosphatidylethanolamine (PtdEtn) from phosphatidylserine (PtdSer). The protein is Phosphatidylserine decarboxylase proenzyme of Mycobacterium leprae (strain Br4923).